The following is a 271-amino-acid chain: Transmembrane protein 150A (271 aa).

Over 1–3 the chain is Cytoplasmic; sequence MTG. Residues 4-24 traverse the membrane as a helical segment; the sequence is WIVLPISLTAFSIPGIWIVYA. At 25–75 the chain is on the extracellular side; the sequence is MAVMNHHVCPVENWTYNLTCTDDNTKAGTPKSCCTLEDVPLISKCGTYPPE. 2 N-linked (GlcNAc...) asparagine glycosylation sites follow: Asn37 and Asn41. A helical transmembrane segment spans residues 76 to 96; that stretch reads SCLFSLIGNVGAFMVVIICLL. At 97–108 the chain is on the cytoplasmic side; sequence RYSQVIEISQRS. The chain crosses the membrane as a helical span at residues 109–129; the sequence is WLNTTALIAGCTNAAGLVMVG. Topologically, residues 130 to 140 are extracellular; that stretch reads NFQVDYAKSLH. A helical transmembrane segment spans residues 141 to 161; that stretch reads YIGAGVAFPAGLLFVCLSSIL. The Cytoplasmic segment spans residues 162–182; sequence SYQLAASALDYWLGHLRVSLT. Residues 183 to 203 form a helical membrane-spanning segment; that stretch reads IVALISLVLTGVFFIQESFLM. The Extracellular portion of the chain corresponds to 204–205; it reads QH. Residues 206-226 traverse the membrane as a helical segment; sequence LVAICEWIFVLDILVFYGTFA. The Cytoplasmic portion of the chain corresponds to 227–271; that stretch reads YEFGSVSTDTMMAALQSSAARSCKSPGSSSTSTQLHCNAERIAMI.

This sequence belongs to the DRAM/TMEM150 family.

It localises to the cell membrane. Regulates localization of phosphatidylinositol 4-kinase (PI4K) to the plasma membrane. The protein is Transmembrane protein 150A (tmem150a) of Xenopus laevis (African clawed frog).